The primary structure comprises 121 residues: Holo-[acyl-carrier-protein] synthase (121 aa).

D8 and E58 together coordinate Mg(2+).

The protein belongs to the P-Pant transferase superfamily. AcpS family. Homotrimer. It depends on Mg(2+) as a cofactor.

The protein resides in the cytoplasm. It carries out the reaction apo-[ACP] + CoA = holo-[ACP] + adenosine 3',5'-bisphosphate + H(+). In terms of biological role, transfers the 4'-phosphopantetheine moiety from coenzyme A to a Ser of fatty acid acyl-carrier-protein ACP. Also modifies the D-alanyl carrier protein but fails to recognize PCP and AcpK, an acyl carrier protein of secondary metabolism. The sequence is that of Holo-[acyl-carrier-protein] synthase from Bacillus subtilis (strain 168).